The following is a 511-amino-acid chain: UDP-N-acetylmuramoyl-L-alanyl-D-glutamate--2,6-diaminopimelate ligase (511 aa).

Ser-30 contacts UDP-N-acetyl-alpha-D-muramoyl-L-alanyl-D-glutamate. 110–116 serves as a coordination point for ATP; sequence GTNGKTT. UDP-N-acetyl-alpha-D-muramoyl-L-alanyl-D-glutamate contacts are provided by residues 152–153, Ser-179, Gln-185, and Arg-187; that span reads TT. Lys-219 is modified (N6-carboxylysine). Residues Arg-385, 409 to 412, Gly-476, and Glu-480 each bind meso-2,6-diaminopimelate; that span reads DNPR. The short motif at 409 to 412 is the Meso-diaminopimelate recognition motif element; it reads DNPR.

It belongs to the MurCDEF family. MurE subfamily. It depends on Mg(2+) as a cofactor. Carboxylation is probably crucial for Mg(2+) binding and, consequently, for the gamma-phosphate positioning of ATP.

It is found in the cytoplasm. It catalyses the reaction UDP-N-acetyl-alpha-D-muramoyl-L-alanyl-D-glutamate + meso-2,6-diaminopimelate + ATP = UDP-N-acetyl-alpha-D-muramoyl-L-alanyl-gamma-D-glutamyl-meso-2,6-diaminopimelate + ADP + phosphate + H(+). It participates in cell wall biogenesis; peptidoglycan biosynthesis. In terms of biological role, catalyzes the addition of meso-diaminopimelic acid to the nucleotide precursor UDP-N-acetylmuramoyl-L-alanyl-D-glutamate (UMAG) in the biosynthesis of bacterial cell-wall peptidoglycan. This chain is UDP-N-acetylmuramoyl-L-alanyl-D-glutamate--2,6-diaminopimelate ligase, found in Geobacter metallireducens (strain ATCC 53774 / DSM 7210 / GS-15).